The chain runs to 315 residues: DNA-directed RNA polymerase subunit alpha (315 aa).

The alpha N-terminal domain (alpha-NTD) stretch occupies residues 1 to 228 (MLEIEKPKIE…EHLRLFIGLT (228 aa)). Residues 246 to 315 (DKILEMTIEE…LGLSLRQEDE (70 aa)) form an alpha C-terminal domain (alpha-CTD) region.

Belongs to the RNA polymerase alpha chain family. As to quaternary structure, homodimer. The RNAP catalytic core consists of 2 alpha, 1 beta, 1 beta' and 1 omega subunit. When a sigma factor is associated with the core the holoenzyme is formed, which can initiate transcription.

It catalyses the reaction RNA(n) + a ribonucleoside 5'-triphosphate = RNA(n+1) + diphosphate. Its function is as follows. DNA-dependent RNA polymerase catalyzes the transcription of DNA into RNA using the four ribonucleoside triphosphates as substrates. The sequence is that of DNA-directed RNA polymerase subunit alpha from Desulforamulus reducens (strain ATCC BAA-1160 / DSM 100696 / MI-1) (Desulfotomaculum reducens).